Consider the following 501-residue polypeptide: Cytochrome P450 71B3 (501 aa).

The helical transmembrane segment at 2–22 threads the bilayer; that stretch reads SILLYFFFLPVILSLIFMKKF. C445 is a binding site for heme.

The protein belongs to the cytochrome P450 family. Heme is required as a cofactor.

It is found in the membrane. This is Cytochrome P450 71B3 (CYP71B3) from Arabidopsis thaliana (Mouse-ear cress).